A 157-amino-acid chain; its full sequence is uncharacterized protein (157 aa).

Disordered regions lie at residues 76 to 105 and 132 to 157; these read AINQ…GPRG and VRAP…RMRG. Over residues 135–148 the composition is skewed to low complexity; that stretch reads PSTKPSKTSSSNNP.

This sequence to M.pneumoniae MPN_091 and MPN_413.

This is an uncharacterized protein from Mycoplasma pneumoniae (strain ATCC 29342 / M129 / Subtype 1) (Mycoplasmoides pneumoniae).